The following is a 239-amino-acid chain: Leucine rich adaptor protein 1 (239 aa).

LRR repeat units follow at residues 55–83 (LGDKIMALKMELAYLRAIDVKILQQLVTL) and 93–114 (LLEERGTLTSHCSSLTSSQYSL). The span at 107 to 116 (LTSSQYSLTG) shows a compositional bias: low complexity. Disordered regions lie at residues 107-139 (LTSSQYSLTGGSPGRSRRGSWDSLPDTSTTDRL) and 200-219 (KPPGERLQGGPPESPEDESA). Phosphoserine occurs at positions 118, 126, 129, and 213.

As to quaternary structure, forms a tripartite complex with CDC42BPA/CDC42BPB and MYO18A acting as an adapter connecting both. Its binding to CDC42BPA/CDC42BPB results in their activation by abolition of their negative autoregulation. Interacts with CDC42BPA and CDC42BPB.

It is found in the cytoplasm. In terms of biological role, acts as an activator of the canonical NF-kappa-B pathway and drive the production of pro-inflammatory cytokines. Promotes the antigen (Ag)-presenting and priming function of dendritic cells via the canonical NF-kappa-B pathway. In concert with MYO18A and CDC42BPA/CDC42BPB, is involved in modulating lamellar actomyosin retrograde flow that is crucial to cell protrusion and migration. Activates CDC42BPA/CDC42BPB and targets it to actomyosin through its interaction with MYO18A, leading to MYL9/MLC2 phosphorylation and MYH9/MYH10-dependent actomyosin assembly in the lamella. The protein is Leucine rich adaptor protein 1 (LURAP1) of Homo sapiens (Human).